Reading from the N-terminus, the 243-residue chain is Transmembrane protein 174 (243 aa).

2 consecutive transmembrane segments (helical) span residues 40–60 and 73–93; these read LLFS…MGWI and LLGP…VCKF.

As to quaternary structure, interacts with SLC34A1; regulates SLC34A1 internalization by PTH and FGF23.

It is found in the endoplasmic reticulum membrane. The protein localises to the apical cell membrane. Its function is as follows. Regulator of plasma phosphate homeostasis. Decreases serum inorganic phosphate (Pi) uptake by regulating the sodium-phosphate cotransporter SLC34A1 trafficking by PTH and FGF23 in the kidney. The protein is Transmembrane protein 174 (TMEM174) of Pongo abelii (Sumatran orangutan).